We begin with the raw amino-acid sequence, 347 residues long: Bifunctional methylenetetrahydrofolate dehydrogenase/cyclohydrolase 2, mitochondrial (347 aa).

Substrate contacts are provided by residues 98 to 102 (YVRNK) and 145 to 147 (VQL). Residues 214-216 (GRS) and Arg-247 each bind NAD(+). 323 to 327 (PGGVG) provides a ligand contact to substrate.

The protein belongs to the tetrahydrofolate dehydrogenase/cyclohydrolase family. Mg(2+) is required as a cofactor. In terms of tissue distribution, isoform 1, isoform 4 and isoform 5 are expressed in brain and placenta.

Its subcellular location is the mitochondrion inner membrane. It carries out the reaction (6R)-5,10-methylene-5,6,7,8-tetrahydrofolate + NAD(+) = (6R)-5,10-methenyltetrahydrofolate + NADH. The catalysed reaction is (6R)-5,10-methenyltetrahydrofolate + H2O = (6R)-10-formyltetrahydrofolate + H(+). It catalyses the reaction (6R)-5,10-methylene-5,6,7,8-tetrahydrofolate + NADP(+) = (6R)-5,10-methenyltetrahydrofolate + NADPH. It functions in the pathway one-carbon metabolism; tetrahydrofolate interconversion. Functionally, bifunctional mitochondrial folate-interconverting enzyme that has both NAD/NADP-dependent methylenetetrahydrofolate dehydrogenase and methenyltetrahydrofolate cyclohydrolase activities. The polypeptide is Bifunctional methylenetetrahydrofolate dehydrogenase/cyclohydrolase 2, mitochondrial (Homo sapiens (Human)).